The sequence spans 563 residues: Arginine--tRNA ligase (563 aa).

Residues 121–131 (PNIAKPFSIGH) carry the 'HIGH' region motif.

The protein belongs to the class-I aminoacyl-tRNA synthetase family. As to quaternary structure, monomer.

It is found in the cytoplasm. It catalyses the reaction tRNA(Arg) + L-arginine + ATP = L-arginyl-tRNA(Arg) + AMP + diphosphate. The chain is Arginine--tRNA ligase from Streptococcus pneumoniae (strain Hungary19A-6).